Consider the following 634-residue polypeptide: Chaperone protein HtpG (634 aa).

The a; substrate-binding stretch occupies residues Met1–Arg339. The segment at Glu340–Arg559 is b. The c stretch occupies residues Met560 to Ala634.

It belongs to the heat shock protein 90 family. Homodimer.

Its subcellular location is the cytoplasm. Functionally, molecular chaperone. Has ATPase activity. In Paraburkholderia xenovorans (strain LB400), this protein is Chaperone protein HtpG.